We begin with the raw amino-acid sequence, 55 residues long: Large ribosomal subunit protein bL33 (55 aa).

It belongs to the bacterial ribosomal protein bL33 family.

This Rhodopseudomonas palustris (strain HaA2) protein is Large ribosomal subunit protein bL33.